Reading from the N-terminus, the 117-residue chain is Ig kappa chain V region 12F2 (117 aa).

The N-terminal stretch at 1 to 6 (LPGARC) is a signal peptide. Positions 7–29 (AYDMTQTPASVEVAVGGTVTIKC) are framework-1. Cysteines 29 and 86 form a disulfide. The segment at 30-40 (QASQSISTYLS) is complementarity-determining-1. The tract at residues 41-55 (WYQQKPGQRPKLLIY) is framework-2. Residues 56–62 (RASTLAS) are complementarity-determining-2. The interval 63-94 (GVSSRFKGSGSGTEFTLTISGVECADAATYYC) is framework-3. Residues 95 to 106 (QQGWSSSNVENV) are complementarity-determining-3. The interval 107–116 (FGGGTEVVVK) is framework-4.

The chain is Ig kappa chain V region 12F2 from Oryctolagus cuniculus (Rabbit).